A 395-amino-acid polypeptide reads, in one-letter code: Acetyl-CoA acetyltransferase (395 aa).

Cys-90 (acyl-thioester intermediate) is an active-site residue. CoA is bound by residues Tyr-185 and Lys-230. Tyr-185 contributes to the K(+) binding site. Ala-246, Ala-247, and Ala-249 together coordinate K(+). Ser-250 serves as a coordination point for CoA. Position 347 (Val-347) interacts with K(+). Residues His-351 and Cys-381 each act as proton acceptor in the active site.

It belongs to the thiolase-like superfamily. Thiolase family. Homotetramer.

The protein resides in the cytoplasm. The enzyme catalyses 2 acetyl-CoA = acetoacetyl-CoA + CoA. It functions in the pathway metabolic intermediate biosynthesis; (R)-mevalonate biosynthesis; (R)-mevalonate from acetyl-CoA: step 1/3. Functionally, acetyl-CoA acetyltransferase; part of the first module of ergosterol biosynthesis pathway that includes the early steps of the pathway, conserved across all eukaryotes, and which results in the formation of mevalonate from acetyl-coenzyme A (acetyl-CoA). Erg10 catalyzes the formation of acetoacetyl-CoA from acetyl-CoA. The first module starts with the action of the cytosolic acetyl-CoA acetyltransferase eg10 that catalyzes the formation of acetoacetyl-CoA. The hydroxymethylglutaryl-CoA synthases erg13 then condenses acetyl-CoA with acetoacetyl-CoA to form HMG-CoA. The rate-limiting step of the early module is the reduction to mevalonate by the 3-hydroxy-3-methylglutaryl-coenzyme A (HMG-CoA) reductases hcs1. The sequence is that of Acetyl-CoA acetyltransferase (erg10) from Schizosaccharomyces pombe (strain 972 / ATCC 24843) (Fission yeast).